Reading from the N-terminus, the 447-residue chain is GTPase Der (447 aa).

EngA-type G domains lie at 3–167 (PVVA…NLPD) and 181–354 (IKLA…KSAT). Residues 9 to 16 (GRPNVGKS), 56 to 60 (DTGGF), 119 to 122 (NKAE), 187 to 194 (GRPNVGKS), 234 to 238 (DTAGL), and 299 to 302 (NKWD) each bind GTP. In terms of domain architecture, KH-like spans 355 to 439 (RKMSTPVLTR…PLRIQFKSSQ (85 aa)).

It belongs to the TRAFAC class TrmE-Era-EngA-EngB-Septin-like GTPase superfamily. EngA (Der) GTPase family. As to quaternary structure, associates with the 50S ribosomal subunit.

In terms of biological role, GTPase that plays an essential role in the late steps of ribosome biogenesis. The sequence is that of GTPase Der from Variovorax paradoxus (strain S110).